We begin with the raw amino-acid sequence, 127 residues long: Probable tautomerase YusQ (127 aa).

Residue Pro-2 is the Proton acceptor; via imino nitrogen of the active site.

Belongs to the 4-oxalocrotonate tautomerase family.

This Bacillus subtilis (strain 168) protein is Probable tautomerase YusQ (yusQ).